Here is a 527-residue protein sequence, read N- to C-terminus: GMP synthase [glutamine-hydrolyzing] (527 aa).

The 194-residue stretch at 19 to 212 folds into the Glutamine amidotransferase type-1 domain; it reads KIIVLDYGSQ…AFSICGAKGD (194 aa). The active-site Nucleophile is cysteine 96. Residues histidine 186 and glutamate 188 contribute to the active site. The GMPS ATP-PPase domain maps to 213–402; it reads WSMANFVDMQ…LGMPDEVVWR (190 aa). An ATP-binding site is contributed by 240–246; the sequence is SGGVDSS.

Homodimer.

The enzyme catalyses XMP + L-glutamine + ATP + H2O = GMP + L-glutamate + AMP + diphosphate + 2 H(+). It functions in the pathway purine metabolism; GMP biosynthesis; GMP from XMP (L-Gln route): step 1/1. Functionally, catalyzes the synthesis of GMP from XMP. This chain is GMP synthase [glutamine-hydrolyzing], found in Streptococcus thermophilus (strain ATCC BAA-250 / LMG 18311).